The primary structure comprises 403 residues: Peroxisomal membrane protein PEX13 (403 aa).

A compositionally biased stretch (pro residues) spans 1 to 11; that stretch reads MASQPPPPPKP. The disordered stretch occupies residues 1-68; the sequence is MASQPPPPPK…PSQQTGSSSV (68 aa). Topologically, residues 1–134 are peroxisomal matrix; that stretch reads MASQPPPPPK…SSRGAFQSIE (134 aa). Positions 59 to 68 are enriched in polar residues; that stretch reads PSQQTGSSSV. The chain crosses the membrane as a helical span at residues 135–155; sequence SIVHAFASVSMMMDATFSAVY. Positions 145–233 are targeting to peroxisomes; it reads MMMDATFSAV…EDRAATSAKS (89 aa). Residues 156 to 174 are Cytoplasmic-facing; it reads NSFRAVLDVANHFSRLKIH. The chain crosses the membrane as a helical span at residues 175–192; that stretch reads FTKVFSAFALVRTIRYLY. Residues 175–196 are interaction with PEX19; the sequence is FTKVFSAFALVRTIRYLYRRLQ. The Peroxisomal matrix portion of the chain corresponds to 193 to 233; the sequence is RRLQRMLGLRRGSENEDLWAESEGTVACLGAEDRAATSAKS. The helical transmembrane segment at 234–254 threads the bilayer; the sequence is WPIFLFFAVILGGPYLIWKLL. Topologically, residues 255–403 are cytoplasmic; that stretch reads STHSDEVTDS…IGKDGEKQDL (149 aa). The SH3 domain occupies 272 to 336; the sequence is DDHVVARAEY…PANYVKILGK (65 aa). Position 354 is a phosphoserine (Ser354).

Belongs to the peroxin-13 family. In terms of assembly, interacts (via SH3 domain) with PEX14 (via SH3-binding motif); forming the PEX13-PEX14 docking complex. Interacts with PEX19.

It is found in the peroxisome membrane. In terms of biological role, component of the PEX13-PEX14 docking complex, a translocon channel that specifically mediates the import of peroxisomal cargo proteins bound to PEX5 receptor. The PEX13-PEX14 docking complex forms a large import pore which can be opened to a diameter of about 9 nm. Mechanistically, PEX5 receptor along with cargo proteins associates with the PEX14 subunit of the PEX13-PEX14 docking complex in the cytosol, leading to the insertion of the receptor into the organelle membrane with the concomitant translocation of the cargo into the peroxisome matrix. Involved in the import of PTS1- and PTS2-type containing proteins. This is Peroxisomal membrane protein PEX13 from Homo sapiens (Human).